The sequence spans 160 residues: Cytochrome b6-f complex subunit 4 (160 aa).

A run of 3 helical transmembrane segments spans residues 36–56 (LLYI…GLAV), 95–115 (LLGV…PFLE), and 131–151 (TVFL…AMPI).

Belongs to the cytochrome b family. PetD subfamily. As to quaternary structure, the 4 large subunits of the cytochrome b6-f complex are cytochrome b6, subunit IV (17 kDa polypeptide, petD), cytochrome f and the Rieske protein, while the 4 small subunits are petG, petL, petM and petN. The complex functions as a dimer.

Its subcellular location is the plastid. The protein localises to the chloroplast thylakoid membrane. In terms of biological role, component of the cytochrome b6-f complex, which mediates electron transfer between photosystem II (PSII) and photosystem I (PSI), cyclic electron flow around PSI, and state transitions. This is Cytochrome b6-f complex subunit 4 from Zygnema circumcarinatum (Green alga).